A 296-amino-acid chain; its full sequence is Ribosomal RNA small subunit methyltransferase A (296 aa).

The span at 1–11 (MERSHVGRDCG) shows a compositional bias: basic and acidic residues. Residues 1-24 (MERSHVGRDCGSRSSPRAFSVPTS) form a disordered region. The span at 12 to 24 (SRSSPRAFSVPTS) shows a compositional bias: polar residues. S-adenosyl-L-methionine-binding residues include Asn43, Leu45, Gly70, Glu91, Asp113, and Asn135.

This sequence belongs to the class I-like SAM-binding methyltransferase superfamily. rRNA adenine N(6)-methyltransferase family. RsmA subfamily.

The protein localises to the cytoplasm. The catalysed reaction is adenosine(1518)/adenosine(1519) in 16S rRNA + 4 S-adenosyl-L-methionine = N(6)-dimethyladenosine(1518)/N(6)-dimethyladenosine(1519) in 16S rRNA + 4 S-adenosyl-L-homocysteine + 4 H(+). In terms of biological role, specifically dimethylates two adjacent adenosines (A1518 and A1519) in the loop of a conserved hairpin near the 3'-end of 16S rRNA in the 30S particle. May play a critical role in biogenesis of 30S subunits. The polypeptide is Ribosomal RNA small subunit methyltransferase A (Salinibacter ruber (strain DSM 13855 / M31)).